The chain runs to 403 residues: Argininosuccinate synthase (403 aa).

ATP is bound by residues A13–S21 and A40. 2 residues coordinate L-citrulline: Y91 and S96. G121 is a binding site for ATP. Positions 123, 127, and 128 each coordinate L-aspartate. N127 contributes to the L-citrulline binding site. R131, S180, S189, E265, and Y277 together coordinate L-citrulline.

This sequence belongs to the argininosuccinate synthase family. Type 1 subfamily. In terms of assembly, homotetramer.

The protein localises to the cytoplasm. The enzyme catalyses L-citrulline + L-aspartate + ATP = 2-(N(omega)-L-arginino)succinate + AMP + diphosphate + H(+). It functions in the pathway amino-acid biosynthesis; L-arginine biosynthesis; L-arginine from L-ornithine and carbamoyl phosphate: step 2/3. This chain is Argininosuccinate synthase, found in Leptospira interrogans serogroup Icterohaemorrhagiae serovar Lai (strain 56601).